The sequence spans 227 residues: Cytochrome c oxidase subunit 2 (227 aa).

Residues 1 to 26 (MATWSNLNLQNSSSPLMEQLIFFHDH) lie on the Mitochondrial intermembrane side of the membrane. A helical membrane pass occupies residues 27–48 (TLMILLMITVLVAYIMSMLFFN). The Mitochondrial matrix segment spans residues 49-62 (LYTNRFLLEGQTIE). A helical membrane pass occupies residues 63-82 (IIWTILPAITLIFIALPSLR). At 83–227 (LLYLLDESMD…FINWIKNYSS (145 aa)) the chain is on the mitochondrial intermembrane side. Residues H160, C195, E197, C199, H203, and M206 each contribute to the Cu cation site. E197 is a binding site for Mg(2+).

It belongs to the cytochrome c oxidase subunit 2 family. In terms of assembly, component of the cytochrome c oxidase (complex IV, CIV), a multisubunit enzyme composed of a catalytic core of 3 subunits and several supernumerary subunits. The complex exists as a monomer or a dimer and forms supercomplexes (SCs) in the inner mitochondrial membrane with ubiquinol-cytochrome c oxidoreductase (cytochrome b-c1 complex, complex III, CIII). Cu cation is required as a cofactor.

It is found in the mitochondrion inner membrane. The enzyme catalyses 4 Fe(II)-[cytochrome c] + O2 + 8 H(+)(in) = 4 Fe(III)-[cytochrome c] + 2 H2O + 4 H(+)(out). Component of the cytochrome c oxidase, the last enzyme in the mitochondrial electron transport chain which drives oxidative phosphorylation. The respiratory chain contains 3 multisubunit complexes succinate dehydrogenase (complex II, CII), ubiquinol-cytochrome c oxidoreductase (cytochrome b-c1 complex, complex III, CIII) and cytochrome c oxidase (complex IV, CIV), that cooperate to transfer electrons derived from NADH and succinate to molecular oxygen, creating an electrochemical gradient over the inner membrane that drives transmembrane transport and the ATP synthase. Cytochrome c oxidase is the component of the respiratory chain that catalyzes the reduction of oxygen to water. Electrons originating from reduced cytochrome c in the intermembrane space (IMS) are transferred via the dinuclear copper A center (CU(A)) of subunit 2 and heme A of subunit 1 to the active site in subunit 1, a binuclear center (BNC) formed by heme A3 and copper B (CU(B)). The BNC reduces molecular oxygen to 2 water molecules using 4 electrons from cytochrome c in the IMS and 4 protons from the mitochondrial matrix. This is Cytochrome c oxidase subunit 2 (COII) from Acheta domesticus (House cricket).